Consider the following 1061-residue polypeptide: E3 ubiquitin-protein ligase Smurf1 (1061 aa).

The region spanning 1–116 (MNKLDYPRRN…KGAGFQRLDL (116 aa)) is the C2 domain. Disordered stretches follow at residues 143–176 (SGNP…WEER) and 188–496 (HATK…SGQR). Positions 167 to 200 (DSLPEGWEERRTDNGRVYYVNHATKSTQWDRPRQ) constitute a WW 1 domain. Polar residues-rich tracts occupy residues 207-225 (SHAT…NSGD) and 233-255 (TRST…SVTA). A Phosphoserine modification is found at S262. Polar residues predominate over residues 264-273 (EILSSVGKEN). Composition is skewed to low complexity over residues 274 to 300 (TSPT…SAGG) and 311 to 322 (PATPTSSTTSAS). Residues 348–359 (TPTSPTGQQNYV) show a composition bias toward polar residues. Residues 360-378 (NGNAQNGSTSGNGSGQAAQ) show a composition bias toward low complexity. Polar residues predominate over residues 379-392 (PQSASNGWTQEDAA). The span at 393–409 (TTTSPSTTTSPPRHSQS) shows a compositional bias: low complexity. T412 bears the Phosphothreonine mark. At S416 the chain carries Phosphoserine. Residues 417–439 (PPASVTPSANGNVHSPNANSTPA) are compositionally biased toward polar residues. Gly residues predominate over residues 480 to 494 (RNGGTSGGGGGGGSG). 2 WW domains span residues 513 to 546 (LDLP…DPRI) and 561 to 594 (GPLP…DPRL). Residues 513-602 (LDLPPGYEMR…RLSGSILQMI (90 aa)) form an interaction with MAD region. Composition is skewed to low complexity over residues 608-617 (PPTSAANAGT) and 624-656 (TPAT…TNPP). Residues 608 to 661 (PPTSAANAGTPAPPSATPATPSAAAAVPPQATPASNATPTTLTTTTNPPHRIVP) are disordered. The HECT domain maps to 723 to 1061 (RAKDMRKRLM…VEETCGFAVE (339 aa)). The active-site Glycyl thioester intermediate is the C1029.

Interacts with phosphorylated MAD.

The enzyme catalyses S-ubiquitinyl-[E2 ubiquitin-conjugating enzyme]-L-cysteine + [acceptor protein]-L-lysine = [E2 ubiquitin-conjugating enzyme]-L-cysteine + N(6)-ubiquitinyl-[acceptor protein]-L-lysine.. The protein operates within protein modification; protein ubiquitination. Its function is as follows. E3 ubiquitin-protein ligase which accepts ubiquitin from an E2 ubiquitin-conjugating enzyme in the form of a thioester and then directly transfers the ubiquitin to targeted substrates. Down-regulates Dpp signaling after gastrulation by promoting MAD ubiquitination and subsequent degradation. The polypeptide is E3 ubiquitin-protein ligase Smurf1 (Drosophila melanogaster (Fruit fly)).